Reading from the N-terminus, the 241-residue chain is Chlorophyll a-b binding protein 6, chloroplastic (241 aa).

The N-terminal 35 residues, Met-1 to Asn-35, are a transit peptide targeting the chloroplast. Trp-48 lines the chlorophyll b pocket. Phe-68, Glu-87, and His-90 together coordinate chlorophyll a. Arg-92 is a chlorophyll b binding site. The chain crosses the membrane as a helical span at residues Trp-93–Val-113. Chlorophyll a is bound at residue Leu-129. The helical transmembrane segment at Pro-132 to Val-152 threads the bilayer. Chlorophyll b is bound by residues Val-133, Glu-153, and Arg-156. Residues Lys-190, Glu-191, Asn-194, Arg-196, Gln-208, and His-224 each coordinate chlorophyll a. Residues Leu-197–Pro-217 traverse the membrane as a helical segment.

Belongs to the light-harvesting chlorophyll a/b-binding (LHC) protein family. In terms of assembly, the LHC complex consists of chlorophyll a-b binding proteins. Red-emitting heterodimer with LHCA4. Interacts with LHCA5. The cofactor is Binds at least 14 chlorophylls (8 Chl-a and 6 Chl-b) and carotenoids such as lutein and neoxanthin.. Photoregulated by reversible phosphorylation of its threonine residues.

It is found in the plastid. The protein resides in the chloroplast thylakoid membrane. In terms of biological role, the light-harvesting complex (LHC) functions as a light receptor, it captures and delivers excitation energy to photosystems with which it is closely associated. This Arabidopsis thaliana (Mouse-ear cress) protein is Chlorophyll a-b binding protein 6, chloroplastic.